A 438-amino-acid chain; its full sequence is Putative F-box/FBD/LRR-repeat protein At2g05300 (438 aa).

An F-box domain is found at 13–59 (EDRISQLPDPLLTQILNLLPTEEAVKTSVLSTRWRTLWLWVPNLELS). LRR repeat units lie at residues 135–166 (CDSLVSLRLYRLSLVDAEFVSLPCLKILRLKD), 167–192 (IVFHNETTFERLVSSCPVLEELKIDV), 235–261 (CLIIDDSVSESFVVTDLESNAKFDISL), and 318–346 (YVTLNASELEWFPIFLRSSPNLKSLILER). The 48-residue stretch at 362 to 409 (SMSSVPECLLTSLEFVEFKAPICGLGPEMMLVWYFLKNSPTLKKLTLP) folds into the FBD domain.

In Arabidopsis thaliana (Mouse-ear cress), this protein is Putative F-box/FBD/LRR-repeat protein At2g05300.